The chain runs to 70 residues: Conotoxin AbVIB (70 aa).

Positions 1–17 are cleaved as a signal peptide; it reads VIIIAVLFLTACQLTTA. A propeptide spanning residues 18 to 41 is cleaved from the precursor; it reads ETSSRGKQKHRALRSTDKNSKLTR. The tract at residues 20–41 is disordered; it reads SSRGKQKHRALRSTDKNSKLTR. Disulfide bonds link C43–C57, C50–C61, and C56–C68.

This sequence belongs to the conotoxin O1 superfamily. Expressed by the venom duct.

The protein localises to the secreted. The protein is Conotoxin AbVIB of Conus abbreviatus (Abbreviated cone).